Reading from the N-terminus, the 408-residue chain is Na(+)/H(+) antiporter NhaA 2 (408 aa).

The next 11 helical transmembrane spans lie at 36–56 (GILLLICVLVSLIVANTGLGV), 79–99 (ILLWINDGLMAVFFLLVGLEI), 115–135 (ALPVLAAVGGVIIPALIYFLF), 145–165 (GWGIPMATDIAFALGILSLLG), 174–194 (IFLAALAIVDDLIAILVIAVF), 197–217 (SELHFLYLGYAGGIFVLLMVF), 225–245 (LFFYLLPGAVMWYFIHHSGIH), 281–301 (FIIMPVFALANTNIAFESEML), 310–330 (LGIILGLVLGKPIGIFVMSWL), 348–368 (VLGLGLLGGIGFTMSIFIALL), and 381–401 (FAILTASVLAGAAGFILLSSY).

The protein belongs to the NhaA Na(+)/H(+) (TC 2.A.33) antiporter family.

Its subcellular location is the cell inner membrane. The catalysed reaction is Na(+)(in) + 2 H(+)(out) = Na(+)(out) + 2 H(+)(in). Na(+)/H(+) antiporter that extrudes sodium in exchange for external protons. The chain is Na(+)/H(+) antiporter NhaA 2 from Flavobacterium johnsoniae (strain ATCC 17061 / DSM 2064 / JCM 8514 / BCRC 14874 / CCUG 350202 / NBRC 14942 / NCIMB 11054 / UW101) (Cytophaga johnsonae).